A 236-amino-acid chain; its full sequence is Protein CUSTOS (236 aa).

2 disordered regions span residues 1 to 57 (MSES…GTTP) and 83 to 236 (VEPA…KKDE). Composition is skewed to basic and acidic residues over residues 10-51 (NTAR…HDGN) and 156-165 (EKTEEKSTKE). A Nucleolar localization signal (NLS1) motif is present at residues 173 to 181 (KMKKKKKRK). A compositionally biased stretch (basic and acidic residues) spans 182–196 (TSSEESQDKVNHQTE). Over residues 197–210 (KQSNVEGNQEQTTA) the composition is skewed to polar residues. The short motif at 211-219 (GERLKKKKK) is the Nucleolar localization signal (NLS2) element. A compositionally biased stretch (basic residues) spans 214 to 227 (LKKKKKKKKKKRKK).

Belongs to the CUSTOS family. Interacts (via NLS1 and NLS2) with dvl2; the interaction is negatively regulated by Wnt stimulation. Interacts with csnk1a1. Interacts with ctnnb1; the interaction is positively regulated by Wnt stimulation. Phosphorylated by ck1/csnk1a1.

It is found in the nucleus envelope. In terms of biological role, essential for Spemann-Mangold organizer formation and subsequent anterior head development in the embryo. Inhibits canonical Wnt signaling pathway by antagonizing nuclear import of beta-catenin (ctnnb1) during embryogenesis. This is Protein CUSTOS from Danio rerio (Zebrafish).